The primary structure comprises 232 residues: Putative B3 domain-containing protein Os11g0242900 (232 aa).

Positions 1-51 (MTVELEKIAGSFFISKGWKTFVHRTGLLSGQYIRFQVLTPSKINVLLFDKK) form a DNA-binding region, TF-B3 1. Residues 92 to 121 (SHTSNKETSSDSRTESMTDIPSSSDNSGET) are disordered. Basic and acidic residues predominate over residues 95-107 (SNKETSSDSRTES). Polar residues predominate over residues 108 to 121 (MTDIPSSSDNSGET). Residues 140 to 232 (DIKNYISIIG…PNVKITIDVL (93 aa)) constitute a DNA-binding region (TF-B3 2).

The protein localises to the nucleus. This chain is Putative B3 domain-containing protein Os11g0242900, found in Oryza sativa subsp. japonica (Rice).